A 298-amino-acid polypeptide reads, in one-letter code: Lipoyl synthase (298 aa).

7 residues coordinate [4Fe-4S] cluster: Cys37, Cys42, Cys48, Cys63, Cys67, Cys70, and Ser277. Residues 49-266 (WGGGTATVML…KTLAESYGFL (218 aa)) enclose the Radical SAM core domain.

This sequence belongs to the radical SAM superfamily. Lipoyl synthase family. The cofactor is [4Fe-4S] cluster.

It is found in the cytoplasm. It carries out the reaction [[Fe-S] cluster scaffold protein carrying a second [4Fe-4S](2+) cluster] + N(6)-octanoyl-L-lysyl-[protein] + 2 oxidized [2Fe-2S]-[ferredoxin] + 2 S-adenosyl-L-methionine + 4 H(+) = [[Fe-S] cluster scaffold protein] + N(6)-[(R)-dihydrolipoyl]-L-lysyl-[protein] + 4 Fe(3+) + 2 hydrogen sulfide + 2 5'-deoxyadenosine + 2 L-methionine + 2 reduced [2Fe-2S]-[ferredoxin]. It functions in the pathway protein modification; protein lipoylation via endogenous pathway; protein N(6)-(lipoyl)lysine from octanoyl-[acyl-carrier-protein]: step 2/2. Catalyzes the radical-mediated insertion of two sulfur atoms into the C-6 and C-8 positions of the octanoyl moiety bound to the lipoyl domains of lipoate-dependent enzymes, thereby converting the octanoylated domains into lipoylated derivatives. This Myxococcus xanthus (strain DK1622) protein is Lipoyl synthase.